The primary structure comprises 117 residues: Protein GL2-INTERACTING REPRESSOR 2 (117 aa).

The interval Met1 to Thr56 is disordered. Residues Lys10 to Leu15 carry the EAR motif. Over residues Arg31–Thr49 the composition is skewed to low complexity.

In terms of assembly, interacts with GL2. Interacts with TPL.

Its subcellular location is the nucleus. Functionally, acts as a negative regulator of root hair development redundantly with GIR1. GIR1 and GIR2 may function as adapter proteins that associate with GL2 and participate in the control of root hair formation. GIR1 and GIR2 may function as adapter proteins that associate with TPL and participate in the repression of root gene expression. This chain is Protein GL2-INTERACTING REPRESSOR 2, found in Arabidopsis thaliana (Mouse-ear cress).